A 1332-amino-acid chain; its full sequence is Aldehyde oxidase 1 (1332 aa).

The 88-residue stretch at 4–91 folds into the 2Fe-2S ferredoxin-type domain; it reads STLYFYVNGR…GAAVTTVEGV (88 aa). Positions 43, 48, 51, and 73 each coordinate [2Fe-2S] cluster. A Mo-molybdopterin-binding site is contributed by Gln112. Residues Cys113, Cys116, Cys148, and Cys150 each contribute to the [2Fe-2S] cluster site. Residue Cys150 participates in Mo-molybdopterin binding. Positions 234–419 constitute an FAD-binding PCMH-type domain; it reads FTGDRVTWIS…LSVTIPYSRK (186 aa). FAD is bound by residues 262–269, Ala343, Ser352, His356, Asp365, and Leu409; that span reads VVMGNTSV. Residues 800 to 801, Met1041, 1082 to 1085, Gln1197, and Leu1262 contribute to the Mo-molybdopterin site; these read AF and GSVV. Glu1264 serves as the catalytic Proton acceptor; for azaheterocycle hydroxylase activity.

The protein belongs to the xanthine dehydrogenase family. As to quaternary structure, homodimer. The cofactor is [2Fe-2S] cluster. FAD serves as cofactor. It depends on Mo-molybdopterin as a cofactor. In terms of tissue distribution, expressed in liver.

It localises to the cytoplasm. It catalyses the reaction an aldehyde + O2 + H2O = a carboxylate + H2O2 + H(+). The catalysed reaction is retinal + O2 + H2O = retinoate + H2O2 + H(+). With respect to regulation, inhibited by menadione and isovanillin. Not inhibited by allopurinol, a xanthine dehydrogenase potent inhibitor. In terms of biological role, oxidase with broad substrate specificity, oxidizing aromatic azaheterocycles, such as N1-methylnicotinamide, N-methylphthalazinium and phthalazine, as well as aldehydes, such as benzaldehyde, retinal, pyridoxal, and vanillin. Plays a key role in the metabolism of xenobiotics and drugs containing aromatic azaheterocyclic substituents. Participates in the bioactivation of prodrugs such as famciclovir, catalyzing the oxidation step from 6-deoxypenciclovir to penciclovir, which is a potent antiviral agent. Is probably involved in the regulation of reactive oxygen species homeostasis. May be a prominent source of superoxide generation via the one-electron reduction of molecular oxygen. May also catalyze nitric oxide (NO) production via the reduction of nitrite to NO with NADH or aldehyde as electron donor. May play a role in adipogenesis. This chain is Aldehyde oxidase 1, found in Cavia porcellus (Guinea pig).